The primary structure comprises 346 residues: Selenocysteine Se-methyltransferase (346 aa).

The Hcy-binding domain occupies 13–330 (SMKELLKETG…TTIRAIHKRL (318 aa)). Residues C248, C315, and C316 each contribute to the Zn(2+) site.

Zn(2+) serves as cofactor. In terms of tissue distribution, expressed in roots, young leaves and florets, but not detected in plants not exposed to selenium.

The catalysed reaction is S-methyl-L-methionine + L-selenocysteine = Se-methyl-L-selenocysteine + L-methionine + H(+). With respect to regulation, inhibited by L-methionine. Functionally, catalyzes the methylation of DL- and L-selenocysteine with S-methylmethionine as donor. Also methylates DL-homocysteine, DL- and L-cysteine in vitro. May be involved in selenium detoxification. This is Selenocysteine Se-methyltransferase (SMT) from Brassica oleracea var. italica (Broccoli).